The primary structure comprises 246 residues: UDP-N-acetyl-D-mannosaminuronic acid transferase (246 aa).

It belongs to the glycosyltransferase 26 family.

The enzyme catalyses UDP-N-acetyl-alpha-D-mannosaminouronate + N-acetyl-alpha-D-glucosaminyl-di-trans,octa-cis-undecaprenyl diphosphate = beta-D-ManNAcA-(1-&gt;4)-alpha-D-GlcNAc-di-trans,octa-cis-undecaprenyl diphosphate + UDP + H(+). The protein operates within bacterial outer membrane biogenesis; enterobacterial common antigen biosynthesis. Functionally, catalyzes the synthesis of Und-PP-GlcNAc-ManNAcA (Lipid II), the second lipid-linked intermediate involved in enterobacterial common antigen (ECA) synthesis. The chain is UDP-N-acetyl-D-mannosaminuronic acid transferase from Escherichia coli O7:K1 (strain IAI39 / ExPEC).